The chain runs to 130 residues: MAQYGNQDQMRKTDEYGNHVQETGVYQGTGTGGMMGGTGTGGMMGGTGGEYGTQGMGTGTHHHEGQQQLRRSDSSSSSEDDGEGGRRKKGLKEKIMEKMPGQHEGEYGQTTGEEKKGMMDKIKDKIPGMH.

Residues 1–130 (MAQYGNQDQM…KIKDKIPGMH (130 aa)) are disordered. A compositionally biased stretch (gly residues) spans 27–58 (QGTGTGGMMGGTGTGGMMGGTGGEYGTQGMGT). Composition is skewed to basic and acidic residues over residues 61-73 (HHHE…RRSD) and 92-130 (KEKI…PGMH).

The protein belongs to the plant dehydrin family.

The protein is Abscisic acid and environmental stress-inducible protein TAS14 (TAS14) of Solanum lycopersicum (Tomato).